The following is a 178-amino-acid chain: RNA-binding protein (178 aa).

Residues 113-178 (PKIGSKNKKT…KGKGKRGGKR (66 aa)) are disordered. Basic residues predominate over residues 168–178 (SKGKGKRGGKR).

It belongs to the phytoreovirus RNA-binding protein family.

The protein localises to the host cytoplasm. In terms of biological role, constituent of viral factories. Binds to ssRNA and dsRNA. This chain is RNA-binding protein, found in Wound tumor virus (WTV).